The primary structure comprises 364 residues: MTKSHVIFSASIALFLLLSISHFPGALSQSNKDCQSKSNYSCIDKNKALDLKLLSIFSILITSLIGVCLPFFARSIPAFQPEKSHFLIVKSFASGIILSTGFMHVLPDSFEMLSSPCLNDNPWHKFPFAGFVAMMSAVFTLMVDSITTSVFTKSGRKDLRADVASVETPDQEIGHVQVHGHVHSHTLPHNLHGENDKELGSYLQLLRYRILAIVLELGIVVQSIVIGLSVGDTNNTCTIKGLVAALCFHQMFEGMGLGGCILQAEYGWVKKAVMAFFFAVTTPFGVVLGMALSKTYKENSPESLITVGLLNASSAGLLIYMALVDLLAADFMGQKMQRSIKLQLKSYAAVLLGAGGMSVMAKWA.

The N-terminal stretch at 1–28 (MTKSHVIFSASIALFLLLSISHFPGALS) is a signal peptide. Over 29-52 (QSNKDCQSKSNYSCIDKNKALDLK) the chain is Extracellular. The chain crosses the membrane as a helical span at residues 53 to 73 (LLSIFSILITSLIGVCLPFFA). At 74 to 85 (RSIPAFQPEKSH) the chain is on the cytoplasmic side. Residues 86-106 (FLIVKSFASGIILSTGFMHVL) traverse the membrane as a helical segment. The Extracellular portion of the chain corresponds to 107 to 125 (PDSFEMLSSPCLNDNPWHK). The helical transmembrane segment at 126–146 (FPFAGFVAMMSAVFTLMVDSI) threads the bilayer. The Cytoplasmic segment spans residues 147-209 (TTSVFTKSGR…GSYLQLLRYR (63 aa)). The helical transmembrane segment at 210–230 (ILAIVLELGIVVQSIVIGLSV) threads the bilayer. At 231–241 (GDTNNTCTIKG) the chain is on the extracellular side. A helical transmembrane segment spans residues 242–262 (LVAALCFHQMFEGMGLGGCIL). Residues 263 to 271 (QAEYGWVKK) lie on the Cytoplasmic side of the membrane. A helical transmembrane segment spans residues 272 to 292 (AVMAFFFAVTTPFGVVLGMAL). Residues 293–303 (SKTYKENSPES) lie on the Extracellular side of the membrane. Residues 304–324 (LITVGLLNASSAGLLIYMALV) form a helical membrane-spanning segment. The Cytoplasmic segment spans residues 325–343 (DLLAADFMGQKMQRSIKLQ). The helical transmembrane segment at 344–364 (LKSYAAVLLGAGGMSVMAKWA) threads the bilayer.

This sequence belongs to the ZIP transporter (TC 2.A.5) family.

The protein localises to the cell membrane. Functionally, probably mediates zinc uptake from the rhizosphere. This is Probable zinc transporter 10 (ZIP10) from Arabidopsis thaliana (Mouse-ear cress).